The chain runs to 473 residues: Photosystem II CP43 reaction center protein (473 aa).

Positions 1-14 (MKTLYSLRRFYPVE) are excised as a propeptide. At Thr-15 the chain carries N-acetylthreonine. Phosphothreonine is present on Thr-15. 5 consecutive transmembrane segments (helical) span residues 69–93 (LFEV…PHLA), 134–155 (LLGP…KDRN), 178–200 (KALY…RKIT), 255–275 (KPFA…LSYS), and 291–312 (WFNN…ASQA). Glu-367 is a [CaMn4O5] cluster binding site. Residues 447 to 471 (RARAAAAGFEKGIDRDFEPVLSMTP) form a helical membrane-spanning segment.

It belongs to the PsbB/PsbC family. PsbC subfamily. In terms of assembly, PSII is composed of 1 copy each of membrane proteins PsbA, PsbB, PsbC, PsbD, PsbE, PsbF, PsbH, PsbI, PsbJ, PsbK, PsbL, PsbM, PsbT, PsbX, PsbY, PsbZ, Psb30/Ycf12, at least 3 peripheral proteins of the oxygen-evolving complex and a large number of cofactors. It forms dimeric complexes. It depends on Binds multiple chlorophylls and provides some of the ligands for the Ca-4Mn-5O cluster of the oxygen-evolving complex. It may also provide a ligand for a Cl- that is required for oxygen evolution. PSII binds additional chlorophylls, carotenoids and specific lipids. as a cofactor.

It localises to the plastid. It is found in the chloroplast thylakoid membrane. Its function is as follows. One of the components of the core complex of photosystem II (PSII). It binds chlorophyll and helps catalyze the primary light-induced photochemical processes of PSII. PSII is a light-driven water:plastoquinone oxidoreductase, using light energy to abstract electrons from H(2)O, generating O(2) and a proton gradient subsequently used for ATP formation. In Lactuca sativa (Garden lettuce), this protein is Photosystem II CP43 reaction center protein.